Here is a 512-residue protein sequence, read N- to C-terminus: Cytochrome P450 1A1 (512 aa).

A mitochondrial targeting signal region spans residues 29 to 40 (SRPRVPKGLKNP). A glycan (O-linked (GlcNAc) serine) is linked at Ser-67. A substrate-binding site is contributed by Phe-224. Heme is bound at residue Cys-457.

This sequence belongs to the cytochrome P450 family. In terms of assembly, interacts with cytosolic chaperones HSP70 and HSP90; this interaction is required for initial targeting to mitochondria. Interacts (via mitochondrial targeting signal) with TOMM40 (via N-terminus); this interaction is required for translocation across the mitochondrial outer membrane. It depends on heme as a cofactor.

It localises to the endoplasmic reticulum membrane. The protein localises to the mitochondrion inner membrane. It is found in the microsome membrane. Its subcellular location is the cytoplasm. The catalysed reaction is an organic molecule + reduced [NADPH--hemoprotein reductase] + O2 = an alcohol + oxidized [NADPH--hemoprotein reductase] + H2O + H(+). It catalyses the reaction estrone + reduced [NADPH--hemoprotein reductase] + O2 = 2-hydroxyestrone + oxidized [NADPH--hemoprotein reductase] + H2O + H(+). The enzyme catalyses estrone + reduced [NADPH--hemoprotein reductase] + O2 = 4-hydroxyestrone + oxidized [NADPH--hemoprotein reductase] + H2O + H(+). It carries out the reaction estrone + reduced [NADPH--hemoprotein reductase] + O2 = 6alpha-hydroxyestrone + oxidized [NADPH--hemoprotein reductase] + H2O + H(+). The catalysed reaction is estrone + reduced [NADPH--hemoprotein reductase] + O2 = 15alpha-hydroxyestrone + oxidized [NADPH--hemoprotein reductase] + H2O + H(+). It catalyses the reaction estrone + reduced [NADPH--hemoprotein reductase] + O2 = 16alpha-hydroxyestrone + oxidized [NADPH--hemoprotein reductase] + H2O + H(+). The enzyme catalyses 17beta-estradiol + reduced [NADPH--hemoprotein reductase] + O2 = 2-hydroxy-17beta-estradiol + oxidized [NADPH--hemoprotein reductase] + H2O + H(+). It carries out the reaction 17beta-estradiol + reduced [NADPH--hemoprotein reductase] + O2 = 4-hydroxy-17beta-estradiol + oxidized [NADPH--hemoprotein reductase] + H2O + H(+). The catalysed reaction is 17beta-estradiol + reduced [NADPH--hemoprotein reductase] + O2 = 6alpha-hydroxy-17beta-estradiol + oxidized [NADPH--hemoprotein reductase] + H2O + H(+). It catalyses the reaction 17beta-estradiol + reduced [NADPH--hemoprotein reductase] + O2 = 7alpha-hydroxy-17beta-estradiol + oxidized [NADPH--hemoprotein reductase] + H2O + H(+). The enzyme catalyses 17beta-estradiol + reduced [NADPH--hemoprotein reductase] + O2 = 15alpha-hydroxy-17beta-estradiol + oxidized [NADPH--hemoprotein reductase] + H2O + H(+). It carries out the reaction (5Z,8Z,11Z)-eicosatrienoate + reduced [NADPH--hemoprotein reductase] + O2 = 19-hydroxy-(5Z,8Z,11Z)-eicosatrienoate + oxidized [NADPH--hemoprotein reductase] + H2O + H(+). The catalysed reaction is (5Z,8Z,11Z,14Z)-eicosatetraenoate + reduced [NADPH--hemoprotein reductase] + O2 = 16-hydroxy-(5Z,8Z,11Z,14Z)-eicosatetraenoate + oxidized [NADPH--hemoprotein reductase] + H2O + H(+). It catalyses the reaction (5Z,8Z,11Z,14Z)-eicosatetraenoate + reduced [NADPH--hemoprotein reductase] + O2 = 17-hydroxy-(5Z,8Z,11Z,14Z)-eicosatetraenoate + oxidized [NADPH--hemoprotein reductase] + H2O + H(+). The enzyme catalyses (5Z,8Z,11Z,14Z)-eicosatetraenoate + reduced [NADPH--hemoprotein reductase] + O2 = 18-hydroxy-(5Z,8Z,11Z,14Z)-eicosatetraenoate + oxidized [NADPH--hemoprotein reductase] + H2O + H(+). It carries out the reaction (5Z,8Z,11Z,14Z)-eicosatetraenoate + reduced [NADPH--hemoprotein reductase] + O2 = 19-hydroxy-(5Z,8Z,11Z,14Z)-eicosatetraenoate + oxidized [NADPH--hemoprotein reductase] + H2O + H(+). The catalysed reaction is (5Z,8Z,11Z,14Z,17Z)-eicosapentaenoate + reduced [NADPH--hemoprotein reductase] + O2 = 19-hydroxy-(5Z,8Z,11Z,14Z,17Z)-eicosapentaenoate + oxidized [NADPH--hemoprotein reductase] + H2O + H(+). It catalyses the reaction (5Z,8Z,11Z,14Z)-eicosatetraenoate + reduced [NADPH--hemoprotein reductase] + O2 = (8R,9S)-epoxy-(5Z,11Z,14Z)-eicosatrienoate + oxidized [NADPH--hemoprotein reductase] + H2O + H(+). The enzyme catalyses (5Z,8Z,11Z,14Z)-eicosatetraenoate + reduced [NADPH--hemoprotein reductase] + O2 = (11R,12S)-epoxy-(5Z,8Z,14Z)-eicosatrienoate + oxidized [NADPH--hemoprotein reductase] + H2O + H(+). It carries out the reaction (5Z,8Z,11Z,14Z)-eicosatetraenoate + reduced [NADPH--hemoprotein reductase] + O2 = (14S,15R)-epoxy-(5Z,8Z,11Z)-eicosatrienoate + oxidized [NADPH--hemoprotein reductase] + H2O + H(+). The catalysed reaction is (5Z,8Z,11Z,14Z)-eicosatetraenoate + reduced [NADPH--hemoprotein reductase] + O2 = (14R,15S)-epoxy-(5Z,8Z,11Z)-eicosatrienoate + oxidized [NADPH--hemoprotein reductase] + H2O + H(+). It catalyses the reaction (5Z,8Z,11Z,14Z,17Z)-eicosapentaenoate + reduced [NADPH--hemoprotein reductase] + O2 = (17R,18S)-epoxy-(5Z,8Z,11Z,14Z)-eicosatetraenoate + oxidized [NADPH--hemoprotein reductase] + H2O + H(+). The enzyme catalyses (4Z,7Z,10Z,13Z,16Z,19Z)-docosahexaenoate + reduced [NADPH--hemoprotein reductase] + O2 = (19S,20R)-epoxy-(4Z,7Z,10Z,13Z,16Z)-docosapentaenoate + oxidized [NADPH--hemoprotein reductase] + H2O + H(+). It carries out the reaction (4Z,7Z,10Z,13Z,16Z,19Z)-docosahexaenoate + reduced [NADPH--hemoprotein reductase] + O2 = (19R,20S)-epoxy-(4Z,7Z,10Z,13Z,16Z)-docosapentaenoate + oxidized [NADPH--hemoprotein reductase] + H2O + H(+). The catalysed reaction is all-trans-retinol + reduced [NADPH--hemoprotein reductase] + O2 = all-trans-retinal + oxidized [NADPH--hemoprotein reductase] + 2 H2O + H(+). It catalyses the reaction all-trans-retinal + reduced [NADPH--hemoprotein reductase] + O2 = all-trans-retinoate + oxidized [NADPH--hemoprotein reductase] + H2O + 2 H(+). The enzyme catalyses (13S)-hydroperoxy-(9Z,11E)-octadecadienoate = 13-oxo-(9Z,11E)-octadecadienoate + H2O. It carries out the reaction (12S)-hydroperoxy-(5Z,8Z,10E,14Z)-eicosatetraenoate = 12-oxo-(5Z,8Z,10E,14Z)-eicosatetraenoate + H2O. The catalysed reaction is (15S)-hydroperoxy-(5Z,8Z,11Z,13E)-eicosatetraenoate = 15-oxo-(5Z,8Z,11Z,13E)-eicosatetraenoate + H2O. It catalyses the reaction (5S)-hydroperoxy-(6E,8Z,11Z,14Z)-eicosatetraenoate = 5-oxo-(6E,8Z,11Z,14Z)-eicosatetraenoate + H2O. It participates in steroid hormone biosynthesis. Its pathway is lipid metabolism; fatty acid metabolism. It functions in the pathway cofactor metabolism; retinol metabolism. Functionally, a cytochrome P450 monooxygenase involved in the metabolism of various endogenous substrates, including fatty acids, steroid hormones and vitamins. Mechanistically, uses molecular oxygen inserting one oxygen atom into a substrate, and reducing the second into a water molecule, with two electrons provided by NADPH via cytochrome P450 reductase (CPR; NADPH-ferrihemoprotein reductase). Catalyzes the hydroxylation of carbon-hydrogen bonds. Exhibits high catalytic activity for the formation of hydroxyestrogens from estrone (E1) and 17beta-estradiol (E2), namely 2-hydroxy E1 and E2, as well as D-ring hydroxylated E1 and E2 at the C15alpha and C16alpha positions. Displays different regioselectivities for polyunsaturated fatty acids (PUFA) hydroxylation. Catalyzes the epoxidation of double bonds of certain PUFA. Converts arachidonic acid toward epoxyeicosatrienoic acid (EET) regioisomers, 8,9-, 11,12-, and 14,15-EET, that function as lipid mediators in the vascular system. Displays an absolute stereoselectivity in the epoxidation of eicosapentaenoic acid (EPA) producing the 17(R),18(S) enantiomer. May play an important role in all-trans retinoic acid biosynthesis in extrahepatic tissues. Catalyzes two successive oxidative transformation of all-trans retinol to all-trans retinal and then to the active form all-trans retinoic acid. May also participate in eicosanoids metabolism by converting hydroperoxide species into oxo metabolites (lipoxygenase-like reaction, NADPH-independent). This Macaca fascicularis (Crab-eating macaque) protein is Cytochrome P450 1A1 (CYP1A1).